The sequence spans 622 residues: Arginine--tRNA ligase (622 aa).

A 'HIGH' region motif is present at residues 127–137 (ANPVHPLHVGH).

It belongs to the class-I aminoacyl-tRNA synthetase family.

Its subcellular location is the cytoplasm. The enzyme catalyses tRNA(Arg) + L-arginine + ATP = L-arginyl-tRNA(Arg) + AMP + diphosphate. This Ignicoccus hospitalis (strain KIN4/I / DSM 18386 / JCM 14125) protein is Arginine--tRNA ligase.